The chain runs to 111 residues: Iron-sulfur cluster insertion protein ErpA (111 aa).

Cysteine 39, cysteine 103, and cysteine 105 together coordinate iron-sulfur cluster.

Belongs to the HesB/IscA family. Homodimer. Requires iron-sulfur cluster as cofactor.

Its function is as follows. Required for insertion of 4Fe-4S clusters for at least IspG. The chain is Iron-sulfur cluster insertion protein ErpA from Buchnera aphidicola subsp. Cinara cedri (strain Cc).